Consider the following 486-residue polypeptide: Protein nucleotidyltransferase YdiU (486 aa).

The ATP site is built by Gly-89, Gly-91, Arg-92, Lys-112, Asp-124, Gly-125, Arg-175, and Arg-182. Asp-251 (proton acceptor) is an active-site residue. The Mg(2+) site is built by Asn-252 and Asp-261. Asp-261 lines the ATP pocket.

It belongs to the SELO family. Requires Mg(2+) as cofactor. The cofactor is Mn(2+).

It catalyses the reaction L-seryl-[protein] + ATP = 3-O-(5'-adenylyl)-L-seryl-[protein] + diphosphate. It carries out the reaction L-threonyl-[protein] + ATP = 3-O-(5'-adenylyl)-L-threonyl-[protein] + diphosphate. The catalysed reaction is L-tyrosyl-[protein] + ATP = O-(5'-adenylyl)-L-tyrosyl-[protein] + diphosphate. The enzyme catalyses L-histidyl-[protein] + UTP = N(tele)-(5'-uridylyl)-L-histidyl-[protein] + diphosphate. It catalyses the reaction L-seryl-[protein] + UTP = O-(5'-uridylyl)-L-seryl-[protein] + diphosphate. It carries out the reaction L-tyrosyl-[protein] + UTP = O-(5'-uridylyl)-L-tyrosyl-[protein] + diphosphate. Its function is as follows. Nucleotidyltransferase involved in the post-translational modification of proteins. It can catalyze the addition of adenosine monophosphate (AMP) or uridine monophosphate (UMP) to a protein, resulting in modifications known as AMPylation and UMPylation. The sequence is that of Protein nucleotidyltransferase YdiU from Shouchella clausii (strain KSM-K16) (Alkalihalobacillus clausii).